Reading from the N-terminus, the 367-residue chain is UDP-N-acetylglucosamine--N-acetylmuramyl-(pentapeptide) pyrophosphoryl-undecaprenol N-acetylglucosamine transferase (367 aa).

Residues 11 to 13, asparagine 125, arginine 163, serine 197, and glutamine 289 contribute to the UDP-N-acetyl-alpha-D-glucosamine site; that span reads TAG.

The protein belongs to the glycosyltransferase 28 family. MurG subfamily.

It is found in the cell membrane. It catalyses the reaction di-trans,octa-cis-undecaprenyl diphospho-N-acetyl-alpha-D-muramoyl-L-alanyl-D-glutamyl-meso-2,6-diaminopimeloyl-D-alanyl-D-alanine + UDP-N-acetyl-alpha-D-glucosamine = di-trans,octa-cis-undecaprenyl diphospho-[N-acetyl-alpha-D-glucosaminyl-(1-&gt;4)]-N-acetyl-alpha-D-muramoyl-L-alanyl-D-glutamyl-meso-2,6-diaminopimeloyl-D-alanyl-D-alanine + UDP + H(+). Its pathway is cell wall biogenesis; peptidoglycan biosynthesis. Its function is as follows. Cell wall formation. Catalyzes the transfer of a GlcNAc subunit on undecaprenyl-pyrophosphoryl-MurNAc-pentapeptide (lipid intermediate I) to form undecaprenyl-pyrophosphoryl-MurNAc-(pentapeptide)GlcNAc (lipid intermediate II). In Clavibacter michiganensis subsp. michiganensis (strain NCPPB 382), this protein is UDP-N-acetylglucosamine--N-acetylmuramyl-(pentapeptide) pyrophosphoryl-undecaprenol N-acetylglucosamine transferase.